Consider the following 422-residue polypeptide: Isocitrate dehydrogenase [NADP] (422 aa).

Threonine 94 contributes to the NADP(+) binding site. The D-threo-isocitrate site is built by serine 103, asparagine 105, arginine 109, arginine 119, and arginine 143. A Mg(2+)-binding site is contributed by aspartate 310. NADP(+) contacts are provided by residues 344–350, asparagine 357, tyrosine 396, and arginine 400; that span reads HGTAPKY.

It belongs to the isocitrate and isopropylmalate dehydrogenases family. As to quaternary structure, homodimer. The cofactor is Mg(2+). It depends on Mn(2+) as a cofactor.

The catalysed reaction is D-threo-isocitrate + NADP(+) = 2-oxoglutarate + CO2 + NADPH. Catalyzes the oxidative decarboxylation of isocitrate to 2-oxoglutarate and carbon dioxide with the concomitant reduction of NADP(+). This Staphylococcus epidermidis (strain ATCC 35984 / DSM 28319 / BCRC 17069 / CCUG 31568 / BM 3577 / RP62A) protein is Isocitrate dehydrogenase [NADP] (icd).